We begin with the raw amino-acid sequence, 592 residues long: Alpha-1,3-galactosidase B (592 aa).

Residues 1 to 14 (MKLLSVLSLSLVLS) form the signal peptide. The N-palmitoyl cysteine moiety is linked to residue cysteine 15. A lipid anchor (S-diacylglycerol cysteine) is attached at cysteine 15. 3 PbH1 repeats span residues 429 to 451 (TPEV…LFST), 452 to 474 (PRKT…LLCG), and 485 to 538 (CRHV…VIED).

This sequence belongs to the glycosyl hydrolase 110 family. B subfamily.

Its subcellular location is the cell membrane. The enzyme catalyses Hydrolysis of terminal, non-reducing branched (1-&gt;3)-alpha-D-galactosidic residues, producing free D-galactose.. The catalysed reaction is Hydrolysis of terminal, non-reducing linear (1-&gt;3)-alpha-D-galactosidic residues, producing free D-galactose.. It catalyses the reaction Hydrolysis of terminal, non-reducing alpha-D-galactose residues in alpha-D-galactosides, including galactose oligosaccharides, galactomannans and galactolipids.. Alpha-galactosidase. Removes both branched alpha-1,3-linked galactose residues of blood group B antigens and linear alpha-1,3-linked galactose structures. The protein is Alpha-1,3-galactosidase B (glaB1) of Phocaeicola vulgatus (strain ATCC 8482 / DSM 1447 / JCM 5826 / CCUG 4940 / NBRC 14291 / NCTC 11154) (Bacteroides vulgatus).